Here is a 2136-residue protein sequence, read N- to C-terminus: MLKAFLPGTQEEETLSSLQSGKVDAKMEMDDPEKAMATVAQLIEQLHAKTSSPQDKELTTARLLGIAKGKREARRLIGSYGQAMPLFISMLRNGTTLAKVNVASILCVLCKDKDLRLKVLLGGCIPPLLSVLKSGTMETRKAAAEAIYEVSSAGISNDHIGMKIFITEGVVPTLWDQLSLKGNQDKVVEGYVTGALRNLCGVDDGYWRLTLEGSGVDIVVSLLSSDNPNSQANAASLLARLVLSFCDSIQKILNSGVVKSLIQLLEQKNDINVRASAADALEALSANSDEAKKCVKDAGGVHALIEAIVAPSKECMQGKHGQSLQEHATGALANVFGGMRHLIIYLGQVSQSPRLTEPIGDVIGALAYALMIFKQPESSENIFDPSVIESILVKLLKPRDTKLIQERILEAMASLYGNSSLSCYLDDAEAKRVLIALITMASADVRERLIICLSGLCHDKVGIWEAIGKREGIQLFISFLGLSSEQHQEYAVEMLKILTAQVDDSKWAVTAAGGIPPLVQLLETGSQKAKEDAACILWNLCCHSEEIRDCVERAGGIPAFLWLLKTGGPNSQETSAKTLVKLVHTADPATINQLLALLLGDDPTSKIQVIEVLGHVLSKASQEDLVHRGCAANKGLRSLVESLTSSREETKEHTASVLADLFSSRQDICGHLATDDIINPWIKLLTNNTQNVAKQVARALDALSRPVKNNNNKKKSYIAEGDIKSLIKLAKNSSIESAENAVSALANLLSDPDIAAEALAEDVVSAFTRILADGSPEGKRNASRALHQLLKNFPVCDVLKGSAQCRFAILSLVDSLKSIDVDSADAFNILEVVALLAKTKSGVNFSYPPWIALAEVPSSLETLVQCLAEGHTLVQDKAIEVLSRLCSDQQFLLSELIVSRPKSMLVLADRIVNASSLEVRVGSTALLLCAAKEKKQLITETLDQSGFLKLLLHALVDMIKHNSTSFSLETEVQTPKGFLEKNVFQDTGSFYFPDPAKILGGTVALWLLCILTSVDAKSKVIVMEAGGLEVLVGKLARYTSSAQAEFEDTEGIWISALLLAIMFQDDNVSFSSTTMRIIPTLAVLLGSDELIDRYFAAHAMASLVCTRNRGINLTIANSGAVSGIINLLGYVESEILNLVALANEFSLVKEPDQVILQHLFEIEDVRLGSTARKSIPLLVDLLRPIPDRPGAPQFAVQILIRIADGSDTNKLLMAEAGAVEALTKYLSLSPQDSTEYAISELLRVLFSNHELRQNEMALSSLNQLIAVLRLGSRSARYSAAGALNELFDAENIRNSEIACQAVQPLMDILGSVSESEQEVALSALIKLSSGNTSNTALLIDVEGSLLENVIKILSSATASEELKINAARLCSVVFSNKNIRTSASASGCMKPLITLMQSERSAAVEAAVFAIKILLDDEQHLELAAAHNIQELLVGLVSGKNYVIIEASLSALIKLGKDRVPRKLDMVEAGIIERCLELLPGASSSLCSAVVELFRILTNSGVIARRPDVAKTVEPLFAVLLRSDLTLWGQHSALQALVNILEKQQTLEAFSFTPSEAIVPLISFLESSSQAIQQLGAELLSHFLTMEDFQQDITTQSAVVPLVRLAGIGILSLQETAIKALEKISASWPKAVLDAEGIFELSKVILQEDPQPPLDLWESAAFVLSNILQYDAECFFRVELPVLVKLLFSTIESTVLLALKALMLHEKNDASSTVQMAELGAIDALLDLLRSHQCEEESGSLLEVIFNNPRVRELKLCKYAIAPLSQYLLDPHTRSEPGRLLAALALGDLSQHEGLSRSSGSVSACRALISVLEEQPTEEMKVVAICALQNFVMNSRTNRRAVAEAGGVLLIQELLLSCNPEVSGQAALMVKFLFSNHTLQEYVSNELIRSLTAALERGLWSTATINIEVLRTLNVIFSNFPKLRASEAATFCIPHLVGALKSGVEDVQGLVLDILYLLRHSWTNMSIDVAKSQAMIAAEAIPVLQMLMKTCPPRFHDKADSLLHCLPGCLTVNVMRANNLKQSMATTNAFCQLTIGNCPPRQTKVVSNSTTPEWKEGFTWAFDVPPKGQKLHIICKSKSTFGKTTLGRVTIQIDKVVTEGEYSGSLSLNHENSKDASSRSLDIEIAWSNRTTDETH.

ARM repeat units follow at residues 27 to 66 (MEMD…LLGI), 71 to 111 (REAR…VLCK), 113 to 152 (KDLR…EVSS), 159 to 201 (HIGM…NLCG), 204 to 243 (DGYW…RLVL), 246 to 286 (CDSI…ALSA), 289 to 337 (DEAK…NVFG), 376 to 417 (PESS…SLYG), 419 to 458 (SSLS…GLCH), 461 to 500 (VGIW…ILTA), 503 to 542 (DDSK…NLCC), 545 to 584 (EEIR…KLVH), 586 to 618 (ADPA…HVLS), 619 to 663 (KASQ…DLFS), 666 to 705 (QDIC…ALSR), 711 to 750 (NNKK…NLLS), 752 to 791 (PDIA…QLLK), 811 to 848 (SLVD…FSYP), 849 to 887 (PWIA…RLCS), 936 to 980 (QLIT…GFLE), 1013 to 1041 (SVDA…YTSS), 1042 to 1083 (AQAE…TLAV), 1109 to 1149 (RGIN…SLVK), 1163 to 1204 (EDVR…RIAD), 1207 to 1247 (DTNK…VLFS), 1249 to 1288 (HELR…ELFD), 1290 to 1329 (ENIR…KLSS), 1333 to 1375 (SNTA…VVFS), 1377 to 1416 (KNIR…ILLD), 1418 to 1457 (EQHL…KLGK), 1460 to 1499 (VPRK…ILTN), 1518 to 1546 (AVLL…KQQT), 1547 to 1585 (LEAF…HFLT), 1587 to 1626 (EDFQ…KISA), 1628 to 1669 (WPKA…NILQ), 1670 to 1704 (YDAE…ALML), 1710 to 1750 (ASST…NNPR), 1790 to 1833 (SQHE…NFVM), 1836 to 1875 (RTNR…FLFS), 1921 to 1960 (PKLR…LLRH), 1969 to 2008 (VAKS…CLPG), and 2010 to 2035 (LTVN…QLTI). A C2 domain is found at 1989-2106 (KTCPPRFHDK…VTEGEYSGSL (118 aa)).

As to quaternary structure, associates with cellulase synthase (CESA) complexes. Binds to cortical microtubules. Interacts with CESA3 and CESA6. In terms of tissue distribution, expressed in dark-grown hypocotyls, leaves (confined to vasculature and trichomes), stamen, pollen, developing siliques, and roots. Restricted in meristematic tissue of the shoot and root. Present in distinct punctae at the cell cortex, called microtubule-associated cellulose synthase compartments, that move with constant velocities of 10 to 3000 nm/min.

It localises to the cell membrane. Its subcellular location is the cytoplasm. The protein resides in the cytoskeleton. It is found in the endomembrane system. In terms of biological role, regulator of the microtubular cytoskeleton. Microtubule-associated protein involved in the association of cellulase synthase (CESA) complexes (CSCs) and cortical microtubules. Promotes dynamics of CSCs in the plasma membrane in both microtubules-dependent and microtubules-independent manners. Regulates primary cell wall biosynthesis and cellulose microfibrils organization. The sequence is that of Protein CELLULOSE SYNTHASE INTERACTIVE 3 from Arabidopsis thaliana (Mouse-ear cress).